The primary structure comprises 703 residues: Glycogen [starch] synthase, liver (703 aa).

Serine 8 is subject to Phosphoserine; by PKA. Serine 11 carries the post-translational modification Phosphoserine. Lysine 40 contributes to the UDP binding site. Positions 205 and 211 each coordinate UDP-alpha-D-glucose. Alpha-D-glucose 6-phosphate is bound by residues histidine 291, glutamate 292, glutamine 294, histidine 297, and lysine 301. A UDP-binding site is contributed by arginine 331. Arginine 331 serves as a coordination point for UDP-alpha-D-glucose. Histidine 501 contributes to the alpha-D-glucose 6-phosphate binding site. UDP-alpha-D-glucose-binding residues include glutamate 510, tryptophan 512, and glycine 513. UDP is bound at residue threonine 515. 2 residues coordinate alpha-D-glucose 6-phosphate: arginine 582 and arginine 586. Serine 627 is modified (phosphoserine). Residues 628–703 (PPTTEGFKYP…KKKLHGEYKN (76 aa)) form a disordered region. Phosphoserine; by GSK3-alpha and GSK3-beta occurs at positions 641, 645, 649, and 653. Residues 647 to 657 (SGSQASSPQSS) show a composition bias toward low complexity. At serine 657 the chain carries Phosphoserine; by CK2. Acidic residues predominate over residues 658–674 (DVEDEVEDERYDEEEEA). Serine 683 carries the phosphoserine modification.

Belongs to the glycosyltransferase 3 family. In terms of assembly, part of the glycogen synthase (GS)-glycogenin complex, a heterooctamer composed of a tetramer of GS and 2 dimers of glycogenin, where each GS protomer binds to one glycogenin subunit (via glycogenin C-terminus); the GS tetramer may dissociate from glycogenin dimers to continue glycogen polymerization on its own. May also form a heterooctamer complex with GYG1 (via GYG1 C-terminus). In terms of processing, primed phosphorylation at Ser-657 (site 5) by CSNK2A1 and CSNK2A2 is required for inhibitory phosphorylation at Ser-641 (site 3a), Ser-645 (site 3b), Ser-649 (site 3c) and Ser-653 (site 4) by GSK3A an GSK3B. Dephosphorylation at Ser-641 and Ser-645 by PP1 activates the enzyme. Phosphorylation at Ser-8 is not required for interaction with GYG1. Interaction with GYG1 does not regulate the phosphorylation at Ser-8 and Ser-641. Specifically expressed in liver (at protein level).

It carries out the reaction [(1-&gt;4)-alpha-D-glucosyl](n) + UDP-alpha-D-glucose = [(1-&gt;4)-alpha-D-glucosyl](n+1) + UDP + H(+). It participates in glycan biosynthesis; glycogen biosynthesis. With respect to regulation, allosteric activation by glucose-6-phosphate. Phosphorylation reduces the activity towards UDP-glucose. When in the non-phosphorylated state, glycogen synthase does not require glucose-6-phosphate as an allosteric activator; when phosphorylated it does. Its function is as follows. Glycogen synthase participates in the glycogen biosynthetic process along with glycogenin and glycogen branching enzyme. Extends the primer composed of a few glucose units formed by glycogenin by adding new glucose units to it. In this context, glycogen synthase transfers the glycosyl residue from UDP-Glc to the non-reducing end of alpha-1,4-glucan. In Homo sapiens (Human), this protein is Glycogen [starch] synthase, liver.